Here is a 172-residue protein sequence, read N- to C-terminus: Shikimate kinase (172 aa).

11–16 lines the ATP pocket; that stretch reads GSGKTT. Thr-15 lines the Mg(2+) pocket. Positions 33, 57, and 79 each coordinate substrate. Arg-117 is an ATP binding site. Arg-136 provides a ligand contact to substrate.

It belongs to the shikimate kinase family. Monomer. It depends on Mg(2+) as a cofactor.

It is found in the cytoplasm. The catalysed reaction is shikimate + ATP = 3-phosphoshikimate + ADP + H(+). It participates in metabolic intermediate biosynthesis; chorismate biosynthesis; chorismate from D-erythrose 4-phosphate and phosphoenolpyruvate: step 5/7. Catalyzes the specific phosphorylation of the 3-hydroxyl group of shikimic acid using ATP as a cosubstrate. The chain is Shikimate kinase from Caldicellulosiruptor saccharolyticus (strain ATCC 43494 / DSM 8903 / Tp8T 6331).